Reading from the N-terminus, the 48-residue chain is Large ribosomal subunit protein uL14 (48 aa).

This sequence belongs to the universal ribosomal protein uL14 family.

This chain is Large ribosomal subunit protein uL14 (RPL23), found in Onchocerca volvulus.